The chain runs to 620 residues: Dihydroxy-acid dehydratase (620 aa).

Residue aspartate 81 coordinates Mg(2+). A [2Fe-2S] cluster-binding site is contributed by cysteine 122. The Mg(2+) site is built by aspartate 123 and lysine 124. An N6-carboxylysine modification is found at lysine 124. [2Fe-2S] cluster is bound at residue cysteine 195. Glutamate 491 is a binding site for Mg(2+). Serine 517 functions as the Proton acceptor in the catalytic mechanism.

Belongs to the IlvD/Edd family. Homodimer. Requires [2Fe-2S] cluster as cofactor. It depends on Mg(2+) as a cofactor.

The enzyme catalyses (2R)-2,3-dihydroxy-3-methylbutanoate = 3-methyl-2-oxobutanoate + H2O. It catalyses the reaction (2R,3R)-2,3-dihydroxy-3-methylpentanoate = (S)-3-methyl-2-oxopentanoate + H2O. The protein operates within amino-acid biosynthesis; L-isoleucine biosynthesis; L-isoleucine from 2-oxobutanoate: step 3/4. Its pathway is amino-acid biosynthesis; L-valine biosynthesis; L-valine from pyruvate: step 3/4. Its function is as follows. Functions in the biosynthesis of branched-chain amino acids. Catalyzes the dehydration of (2R,3R)-2,3-dihydroxy-3-methylpentanoate (2,3-dihydroxy-3-methylvalerate) into 2-oxo-3-methylpentanoate (2-oxo-3-methylvalerate) and of (2R)-2,3-dihydroxy-3-methylbutanoate (2,3-dihydroxyisovalerate) into 2-oxo-3-methylbutanoate (2-oxoisovalerate), the penultimate precursor to L-isoleucine and L-valine, respectively. In Colwellia psychrerythraea (strain 34H / ATCC BAA-681) (Vibrio psychroerythus), this protein is Dihydroxy-acid dehydratase.